Here is a 672-residue protein sequence, read N- to C-terminus: MESIIQQINQLRTSLRHHEHLYHVLDAPEIPDAEYDRLMQQLRELEAQHPELITNDSPTQRVGAAPLDAFEQVKHEVPMLSLDNVFDEESYLAFDKRVHDRLKRADPLTFCCELKLDGLAVSLLYEDGELVRAATRGDGTTGENITANVRTIRAIPLRLQGDNIPRRVEVRGEVFMPLAGFEQLNDEARRKGGKVFANPRNAAAGSLRQLDPRITAKRPLTFFCYGVGLLEGGELPRSHIQRLMQFKAWGLPVSERVKLCTGSEQVIAFYRQVEQDRGGLGFDIDGVVIKVDSLDLQEQLGFVARAPRWATAFKFPAQEQITQVREVEFQVGRTGAITPVARLEPVQVAGVIVSNATLHNADEIERLGLRIGDTVIVRRAGDVIPQVVGVVMDQRPQDAKEITFPEHCPVCGSDIERVEGEAVARCTGGLFCAAQRKEALKHFVSRRALDVDGMGDKIIEQLVEKQYVENPADLFTLTAGKLTGLDRMGPKSAQNLIVALEKAKQTTFARFLYALGIREVGEATAANLAAHFRNLENLRAADIEALKSVPDVGEVVAKHVVNFLGEEHNQKVIEALEKVITWPEPQQIIAEEIDSPFAGKTVVLTGSLTILSRDEAKDRLAALGAKVSGSVSKKTDLVIAGEAAGSKLVKAQELGITVIDEAEMIRLLGESS.

NAD(+)-binding positions include 32–36 (DAEYD), 81–82 (SL), and Glu113. Catalysis depends on Lys115, which acts as the N6-AMP-lysine intermediate. Residues Arg136, Glu173, Lys290, and Lys314 each contribute to the NAD(+) site. Zn(2+) is bound by residues Cys408, Cys411, Cys426, and Cys432. The BRCT domain occupies 592 to 672 (EIDSPFAGKT…EMIRLLGESS (81 aa)).

The protein belongs to the NAD-dependent DNA ligase family. LigA subfamily. Mg(2+) serves as cofactor. It depends on Mn(2+) as a cofactor.

It carries out the reaction NAD(+) + (deoxyribonucleotide)n-3'-hydroxyl + 5'-phospho-(deoxyribonucleotide)m = (deoxyribonucleotide)n+m + AMP + beta-nicotinamide D-nucleotide.. Its function is as follows. DNA ligase that catalyzes the formation of phosphodiester linkages between 5'-phosphoryl and 3'-hydroxyl groups in double-stranded DNA using NAD as a coenzyme and as the energy source for the reaction. It is essential for DNA replication and repair of damaged DNA. The chain is DNA ligase from Yersinia enterocolitica serotype O:8 / biotype 1B (strain NCTC 13174 / 8081).